Here is a 135-residue protein sequence, read N- to C-terminus: Gene 52 protein (135 aa).

Disordered stretches follow at residues 1–20 (MASGGGGGSKRCPKKQPTPE) and 110–135 (LGGRASSDSSKASKPRGRSKHRAEKQ). Residues 122–135 (SKPRGRSKHRAEKQ) show a composition bias toward basic residues.

The protein belongs to the herpesviridae BLRF2 family.

The polypeptide is Gene 52 protein (52) (Equine herpesvirus 2 (strain 86/87) (EHV-2)).